A 212-amino-acid polypeptide reads, in one-letter code: Deoxyribose-phosphate aldolase (212 aa).

Aspartate 89 acts as the Proton donor/acceptor in catalysis. The active-site Schiff-base intermediate with acetaldehyde is lysine 151. Lysine 180 (proton donor/acceptor) is an active-site residue.

This sequence belongs to the DeoC/FbaB aldolase family. DeoC type 1 subfamily.

Its subcellular location is the cytoplasm. The catalysed reaction is 2-deoxy-D-ribose 5-phosphate = D-glyceraldehyde 3-phosphate + acetaldehyde. Its pathway is carbohydrate degradation; 2-deoxy-D-ribose 1-phosphate degradation; D-glyceraldehyde 3-phosphate and acetaldehyde from 2-deoxy-alpha-D-ribose 1-phosphate: step 2/2. In terms of biological role, catalyzes a reversible aldol reaction between acetaldehyde and D-glyceraldehyde 3-phosphate to generate 2-deoxy-D-ribose 5-phosphate. The protein is Deoxyribose-phosphate aldolase of Clostridium botulinum (strain 657 / Type Ba4).